The following is a 155-amino-acid chain: Large ribosomal subunit protein uL22 (155 aa).

The protein belongs to the universal ribosomal protein uL22 family. In terms of assembly, part of the 50S ribosomal subunit.

This protein binds specifically to 23S rRNA. It makes multiple contacts with different domains of the 23S rRNA in the assembled 50S subunit and ribosome. Its function is as follows. The globular domain of the protein is located near the polypeptide exit tunnel on the outside of the subunit, while an extended beta-hairpin is found that lines the wall of the exit tunnel in the center of the 70S ribosome. This chain is Large ribosomal subunit protein uL22, found in Pyrococcus furiosus (strain ATCC 43587 / DSM 3638 / JCM 8422 / Vc1).